A 241-amino-acid polypeptide reads, in one-letter code: Dihydropteridine reductase (241 aa).

11–35 (LVYGGRGALGSRCVQAFRARNWWVA) lines the NADP(+) pocket. N6-succinyllysine is present on residues lysine 70, lysine 76, lysine 93, and lysine 99. Catalysis depends on tyrosine 147, which acts as the Proton acceptor. Phosphoserine is present on serine 170.

This sequence belongs to the short-chain dehydrogenases/reductases (SDR) family. In terms of assembly, homodimer.

The catalysed reaction is 5,6,7,8-tetrahydropteridine + NAD(+) = 6,7-dihydropteridine + NADH + H(+). The enzyme catalyses 5,6,7,8-tetrahydropteridine + NADP(+) = 6,7-dihydropteridine + NADPH + H(+). Functionally, catalyzes the conversion of quinonoid dihydrobiopterin into tetrahydrobiopterin. This chain is Dihydropteridine reductase (Qdpr), found in Rattus norvegicus (Rat).